The primary structure comprises 142 residues: DNA-directed RNA polymerase subunit omega (142 aa).

A disordered region spans residues 104–142 (FNTDADVDQESTDIQDDEVENEMSNQDSEDIDDEVDNEE). Residues 108–142 (ADVDQESTDIQDDEVENEMSNQDSEDIDDEVDNEE) show a composition bias toward acidic residues.

This sequence belongs to the RNA polymerase subunit omega family. The RNAP catalytic core consists of 2 alpha, 1 beta, 1 beta' and 1 omega subunit. When a sigma factor is associated with the core the holoenzyme is formed, which can initiate transcription.

It catalyses the reaction RNA(n) + a ribonucleoside 5'-triphosphate = RNA(n+1) + diphosphate. Functionally, promotes RNA polymerase assembly. Latches the N- and C-terminal regions of the beta' subunit thereby facilitating its interaction with the beta and alpha subunits. This chain is DNA-directed RNA polymerase subunit omega, found in Wolbachia sp. subsp. Brugia malayi (strain TRS).